Consider the following 312-residue polypeptide: tRNA (adenine(58)-N(1))-methyltransferase catalytic subunit trmt61a (312 aa).

S-adenosyl-L-methionine contacts are provided by residues Leu85, 112–114, Glu133, Arg138, 161–162, and Asp183; these read SGS and DA.

The protein belongs to the class I-like SAM-binding methyltransferase superfamily. TRM61 family. Heterotetramer; composed of two copies of trmt6 and two copies of trmt61a.

Its subcellular location is the nucleus. The catalysed reaction is adenosine(58) in tRNA + S-adenosyl-L-methionine = N(1)-methyladenosine(58) in tRNA + S-adenosyl-L-homocysteine + H(+). Inhibited by calcium and magnesium ions and spermidine. Enhanced by KCl, NaCl and NH(4)Cl in concentrations from 0.1-0.25 M. Concentrations of more than 0.3 M are inhibitory. Its function is as follows. Catalytic subunit of tRNA (adenine-N(1)-)-methyltransferase, which catalyzes the formation of N(1)-methyladenine at position 58 (m1A58) in initiator methionyl-tRNA. This chain is tRNA (adenine(58)-N(1))-methyltransferase catalytic subunit trmt61a (trmt61a), found in Dictyostelium discoideum (Social amoeba).